Here is a 144-residue protein sequence, read N- to C-terminus: Large ribosomal subunit protein uL16 (144 aa).

Residues 1–14 (MLMPKRVKYRKPHR) show a composition bias toward basic residues. A disordered region spans residues 1–25 (MLMPKRVKYRKPHRPGTQGKATRGN).

The protein belongs to the universal ribosomal protein uL16 family. Part of the 50S ribosomal subunit.

Functionally, binds 23S rRNA and is also seen to make contacts with the A and possibly P site tRNAs. This chain is Large ribosomal subunit protein uL16, found in Moorella thermoacetica (strain ATCC 39073 / JCM 9320).